Consider the following 124-residue polypeptide: Biogenesis of lysosome-related organelles complex 1 subunit CNL1 (124 aa).

The interval 1 to 20 (MMSENITAVEPQENNDVEAD) is disordered. The stretch at 75 to 98 (IGMAKDLLQKCDDLEKHYDQLDAV) forms a coiled coil.

It belongs to the BLOC1S4 family. Component of the biogenesis of lysosome-related organelles complex-1 (BLOC-1).

It is found in the cytoplasm. Functionally, component of the biogenesis of lysosome-related organelles complex-1 (BLOC-1), a complex that is involved in endosomal cargo sorting. The polypeptide is Biogenesis of lysosome-related organelles complex 1 subunit CNL1 (CLN1) (Kluyveromyces lactis (strain ATCC 8585 / CBS 2359 / DSM 70799 / NBRC 1267 / NRRL Y-1140 / WM37) (Yeast)).